Reading from the N-terminus, the 637-residue chain is tRNA-dihydrouridine(47) synthase [NAD(P)(+)]-like (637 aa).

Disordered stretches follow at residues 1–21 (MAETAAESGGGGDSGVGACER), 41–63 (LDGDKQEGACQEVPTGDPAEPGA), and 85–105 (ERQVPKRARGQNKSRPHVKPA). Positions 89–104 (PKRARGQNKSRPHVKP) are enriched in basic residues. C3H1-type zinc fingers lie at residues 107 to 137 (YDKDRLCPSFLQEPATPCAFGDRCRFLHDVG) and 145 to 175 (ADLGPRCVLFETFGRCPFSMTCRFAGAHLGP). Thr-260 carries the post-translational modification Phosphothreonine. Ser-263 and Ser-264 each carry phosphoserine. FMN-binding positions include 298–300 (PLT) and Gln-352. Catalysis depends on Cys-383, which acts as the Proton donor. A Glycyl lysine isopeptide (Lys-Gly) (interchain with G-Cter in SUMO2) cross-link involves residue Lys-403. FMN is bound by residues Lys-422, His-452, 484-486 (NGD), and 507-508 (AR).

It belongs to the Dus family. Dus3 subfamily. FMN serves as cofactor.

The catalysed reaction is 5,6-dihydrouridine(47) in tRNA + NAD(+) = uridine(47) in tRNA + NADH + H(+). It carries out the reaction 5,6-dihydrouridine(47) in tRNA + NADP(+) = uridine(47) in tRNA + NADPH + H(+). It catalyses the reaction a 5,6-dihydrouridine in mRNA + NAD(+) = a uridine in mRNA + NADH + H(+). The enzyme catalyses a 5,6-dihydrouridine in mRNA + NADP(+) = a uridine in mRNA + NADPH + H(+). Its function is as follows. Catalyzes the synthesis of dihydrouridine, a modified base, in various RNAs, such as tRNAs, mRNAs and some long non-coding RNAs (lncRNAs). Mainly modifies the uridine in position 47 (U47) in the D-loop of most cytoplasmic tRNAs. Also able to mediate the formation of dihydrouridine in some mRNAs, thereby regulating their translation. This Mus musculus (Mouse) protein is tRNA-dihydrouridine(47) synthase [NAD(P)(+)]-like.